Consider the following 212-residue polypeptide: Large ribosomal subunit protein uL3 (212 aa).

Q154 carries the post-translational modification N5-methylglutamine.

This sequence belongs to the universal ribosomal protein uL3 family. As to quaternary structure, part of the 50S ribosomal subunit. Forms a cluster with proteins L14 and L19. In terms of processing, methylated by PrmB.

Functionally, one of the primary rRNA binding proteins, it binds directly near the 3'-end of the 23S rRNA, where it nucleates assembly of the 50S subunit. This is Large ribosomal subunit protein uL3 from Hydrogenovibrio crunogenus (strain DSM 25203 / XCL-2) (Thiomicrospira crunogena).